A 464-amino-acid chain; its full sequence is Argininosuccinate lyase (464 aa).

The protein belongs to the lyase 1 family. Argininosuccinate lyase subfamily.

Its subcellular location is the cytoplasm. The enzyme catalyses 2-(N(omega)-L-arginino)succinate = fumarate + L-arginine. It functions in the pathway amino-acid biosynthesis; L-arginine biosynthesis; L-arginine from L-ornithine and carbamoyl phosphate: step 3/3. The protein is Argininosuccinate lyase of Frankia casuarinae (strain DSM 45818 / CECT 9043 / HFP020203 / CcI3).